The following is an 87-amino-acid chain: MSTSVPQGHNWTRPVKKDDDEEDPLDQLITRSGCAASHFAVQECMAQHQDWRQCQPQVQAFRDCMSAQQARRREELQRRKEQASAQH.

A compositionally biased stretch (polar residues) spans 1–10; it reads MSTSVPQGHN. Residues 1-24 are disordered; that stretch reads MSTSVPQGHNWTRPVKKDDDEEDP. In terms of domain architecture, CHCH spans 31 to 72; the sequence is RSGCAASHFAVQECMAQHQDWRQCQPQVQAFRDCMSAQQARR. 2 consecutive short sequence motifs (cx9C motif) follow at residues 34–44 and 54–64; these read CAASHFAVQEC and CQPQVQAFRDC. 2 cysteine pairs are disulfide-bonded: Cys34/Cys64 and Cys44/Cys54. The disordered stretch occupies residues 68–87; sequence QQARRREELQRRKEQASAQH. A compositionally biased stretch (basic and acidic residues) spans 71 to 87; it reads RRREELQRRKEQASAQH.

It belongs to the COA4 family.

It is found in the mitochondrion. Functionally, putative COX assembly factor. This is Cytochrome c oxidase assembly factor 4 homolog, mitochondrial (COA4) from Mus musculus (Mouse).